The following is a 574-amino-acid chain: Proline--tRNA ligase (574 aa).

The protein belongs to the class-II aminoacyl-tRNA synthetase family. ProS type 1 subfamily. In terms of assembly, homodimer.

It localises to the cytoplasm. It catalyses the reaction tRNA(Pro) + L-proline + ATP = L-prolyl-tRNA(Pro) + AMP + diphosphate. In terms of biological role, catalyzes the attachment of proline to tRNA(Pro) in a two-step reaction: proline is first activated by ATP to form Pro-AMP and then transferred to the acceptor end of tRNA(Pro). As ProRS can inadvertently accommodate and process non-cognate amino acids such as alanine and cysteine, to avoid such errors it has two additional distinct editing activities against alanine. One activity is designated as 'pretransfer' editing and involves the tRNA(Pro)-independent hydrolysis of activated Ala-AMP. The other activity is designated 'posttransfer' editing and involves deacylation of mischarged Ala-tRNA(Pro). The misacylated Cys-tRNA(Pro) is not edited by ProRS. In Anaeromyxobacter sp. (strain K), this protein is Proline--tRNA ligase.